Consider the following 121-residue polypeptide: Large ribosomal subunit protein bL19 (121 aa).

It belongs to the bacterial ribosomal protein bL19 family.

Functionally, this protein is located at the 30S-50S ribosomal subunit interface and may play a role in the structure and function of the aminoacyl-tRNA binding site. The sequence is that of Large ribosomal subunit protein bL19 (rplS) from Chlamydia pneumoniae (Chlamydophila pneumoniae).